An 874-amino-acid chain; its full sequence is Alanine--tRNA ligase (874 aa).

4 residues coordinate Zn(2+): H562, H566, C665, and H669.

The protein belongs to the class-II aminoacyl-tRNA synthetase family. Zn(2+) is required as a cofactor.

The protein localises to the cytoplasm. It carries out the reaction tRNA(Ala) + L-alanine + ATP = L-alanyl-tRNA(Ala) + AMP + diphosphate. Its function is as follows. Catalyzes the attachment of alanine to tRNA(Ala) in a two-step reaction: alanine is first activated by ATP to form Ala-AMP and then transferred to the acceptor end of tRNA(Ala). Also edits incorrectly charged Ser-tRNA(Ala) and Gly-tRNA(Ala) via its editing domain. In Pseudomonas fluorescens (strain Pf0-1), this protein is Alanine--tRNA ligase.